The chain runs to 227 residues: Isopentenyl-diphosphate Delta-isomerase 1 (227 aa).

Lysine 36 provides a ligand contact to substrate. Residues histidine 40 and histidine 51 each coordinate Mg(2+). In terms of domain architecture, Nudix hydrolase spans 49 to 199 (LLHRAFSVFL…EVKLTPWFKI (151 aa)). Positions 70 and 74 each coordinate substrate. Residue cysteine 86 is part of the active site. A substrate-binding site is contributed by serine 87. Mg(2+)-binding residues include glutamate 146 and glutamate 148. Glutamate 148 is a catalytic residue. Lysine 176 bears the N6-acetyllysine mark. A Microbody targeting signal motif is present at residues 225 to 227 (HRM).

It belongs to the IPP isomerase type 1 family. As to quaternary structure, monomer. It depends on Mg(2+) as a cofactor.

It localises to the peroxisome. It carries out the reaction isopentenyl diphosphate = dimethylallyl diphosphate. It functions in the pathway isoprenoid biosynthesis; dimethylallyl diphosphate biosynthesis; dimethylallyl diphosphate from isopentenyl diphosphate: step 1/1. Functionally, catalyzes the 1,3-allylic rearrangement of the homoallylic substrate isopentenyl (IPP) to its highly electrophilic allylic isomer, dimethylallyl diphosphate (DMAPP). This is Isopentenyl-diphosphate Delta-isomerase 1 (IDI1) from Mesocricetus auratus (Golden hamster).